Consider the following 88-residue polypeptide: MANIKSQIKRNRQNEKRRLRNKSVKSSLKTAIRKFHEAAETGDVEKATVLMRDAARKLDKAASKGVIHANQAANRKSAIAKRVASFSA.

Residues 1–28 (MANIKSQIKRNRQNEKRRLRNKSVKSSL) form a disordered region. The segment covering 7 to 23 (QIKRNRQNEKRRLRNKS) has biased composition (basic residues).

It belongs to the bacterial ribosomal protein bS20 family.

In terms of biological role, binds directly to 16S ribosomal RNA. This Salinispora tropica (strain ATCC BAA-916 / DSM 44818 / JCM 13857 / NBRC 105044 / CNB-440) protein is Small ribosomal subunit protein bS20.